Reading from the N-terminus, the 156-residue chain is Biotin carboxyl carrier protein of acetyl-CoA carboxylase (156 aa).

The Biotinyl-binding domain occupies 80–156 (GNVVRSPMVG…EFDQPLFTIV (77 aa)). K122 is modified (N6-biotinyllysine).

Homodimer.

Its pathway is lipid metabolism; fatty acid biosynthesis. Functionally, this protein is a component of the acetyl coenzyme A carboxylase complex; first, biotin carboxylase catalyzes the carboxylation of the carrier protein and then the transcarboxylase transfers the carboxyl group to form malonyl-CoA. The chain is Biotin carboxyl carrier protein of acetyl-CoA carboxylase (accB) from Pseudomonas aeruginosa (strain ATCC 15692 / DSM 22644 / CIP 104116 / JCM 14847 / LMG 12228 / 1C / PRS 101 / PAO1).